A 914-amino-acid polypeptide reads, in one-letter code: Valine--tRNA ligase (914 aa).

The short motif at 47–57 (PYPTGELHMGH) is the 'HIGH' region element. A 'KMSKS' region motif is present at residues 552–556 (KMSKS). An ATP-binding site is contributed by Lys-555.

This sequence belongs to the class-I aminoacyl-tRNA synthetase family. ValS type 2 subfamily.

It is found in the cytoplasm. It catalyses the reaction tRNA(Val) + L-valine + ATP = L-valyl-tRNA(Val) + AMP + diphosphate. Functionally, catalyzes the attachment of valine to tRNA(Val). As ValRS can inadvertently accommodate and process structurally similar amino acids such as threonine, to avoid such errors, it has a 'posttransfer' editing activity that hydrolyzes mischarged Thr-tRNA(Val) in a tRNA-dependent manner. This chain is Valine--tRNA ligase, found in Methanopyrus kandleri (strain AV19 / DSM 6324 / JCM 9639 / NBRC 100938).